Here is a 206-residue protein sequence, read N- to C-terminus: MARYLGPKCKLSRREGTDLFLKSGVKANDEKCKMNTAPGQHGARRARLSDYGLQLREKQKVRRMYGILEGQFKKYYVEASRRKGNTGATLLELLESRLDNVVYRMGFAATRAEARQLVVHKGIMVNGHTCNVPSAQVKVGDVVAVREKAKKQLRIQNAVELAKHRKELSWIDVNTDSLEGTMKSSPDRSELSADINEQLIIELYSK.

Residues 96-158 form the S4 RNA-binding domain; that stretch reads SRLDNVVYRM…AKKQLRIQNA (63 aa).

Belongs to the universal ribosomal protein uS4 family. As to quaternary structure, part of the 30S ribosomal subunit. Contacts protein S5. The interaction surface between S4 and S5 is involved in control of translational fidelity.

One of the primary rRNA binding proteins, it binds directly to 16S rRNA where it nucleates assembly of the body of the 30S subunit. Its function is as follows. With S5 and S12 plays an important role in translational accuracy. The protein is Small ribosomal subunit protein uS4 of Francisella tularensis subsp. holarctica (strain OSU18).